The following is a 284-amino-acid chain: Aldo-keto reductase MAV_3816 (284 aa).

The Proton donor role is filled by Tyr-59. NADPH-binding residues include Leu-199, Ile-237, Arg-239, Ser-240, Ala-241, Ser-248, and Arg-275.

It belongs to the aldo/keto reductase family.

The protein is Aldo-keto reductase MAV_3816 of Mycobacterium avium (strain 104).